Reading from the N-terminus, the 81-residue chain is MKTLLLTLVVVTIVCLDLGYTLKCNKLIPIASKTCPAGKNLCYKMFMVATPKVPVKRGCIDVCPKNSLLVKYVCCNTDRCN.

A signal peptide spans 1–21 (MKTLLLTLVVVTIVCLDLGYT). Intrachain disulfides connect cysteine 24-cysteine 42, cysteine 35-cysteine 59, cysteine 63-cysteine 74, and cysteine 75-cysteine 80.

This sequence belongs to the three-finger toxin family. Short-chain subfamily. Type IA cytotoxin sub-subfamily. In terms of assembly, monomer in solution; Homodimer and oligomer in the presence of negatively charged lipids forming a pore with a size ranging between 20 and 30 Angstroms. As to expression, expressed by the venom gland.

It is found in the secreted. Its subcellular location is the target cell membrane. Functionally, shows cytolytic activity on many different cells by forming pore in lipid membranes. In vivo, increases heart rate or kills the animal by cardiac arrest. In addition, it binds to heparin with high affinity, interacts with Kv channel-interacting protein 1 (KCNIP1) in a calcium-independent manner, and binds to integrin alpha-V/beta-3 (ITGAV/ITGB3) with moderate affinity. This is Cytotoxin 3d from Naja atra (Chinese cobra).